A 236-amino-acid polypeptide reads, in one-letter code: 2-C-methyl-D-erythritol 4-phosphate cytidylyltransferase (236 aa).

The protein belongs to the IspD/TarI cytidylyltransferase family. IspD subfamily. Homodimer.

It carries out the reaction 2-C-methyl-D-erythritol 4-phosphate + CTP + H(+) = 4-CDP-2-C-methyl-D-erythritol + diphosphate. Its pathway is isoprenoid biosynthesis; isopentenyl diphosphate biosynthesis via DXP pathway; isopentenyl diphosphate from 1-deoxy-D-xylulose 5-phosphate: step 2/6. Its function is as follows. Catalyzes the formation of 4-diphosphocytidyl-2-C-methyl-D-erythritol from CTP and 2-C-methyl-D-erythritol 4-phosphate (MEP). In Escherichia coli O45:K1 (strain S88 / ExPEC), this protein is 2-C-methyl-D-erythritol 4-phosphate cytidylyltransferase.